The chain runs to 360 residues: Protein Wnt-2 (360 aa).

A signal peptide spans 1–25; the sequence is MNSPLRGIWLWLPLLLTWLTPEVSS. 11 cysteine pairs are disulfide-bonded: C76–C87, C127–C135, C137–C157, C206–C220, C208–C215, C278–C309, C294–C304, C308–C348, C324–C339, C326–C336, and C331–C332. Residue S212 is the site of O-palmitoleoyl serine; by PORCN attachment. N295 carries N-linked (GlcNAc...) asparagine glycosylation.

Belongs to the Wnt family. Palmitoleoylation is required for efficient binding to frizzled receptors. Depalmitoleoylation leads to Wnt signaling pathway inhibition.

The protein resides in the secreted. The protein localises to the extracellular space. It is found in the extracellular matrix. Ligand for members of the frizzled family of seven transmembrane receptors. Functions in the canonical Wnt signaling pathway that results in activation of transcription factors of the TCF/LEF family. Functions as a upstream regulator of FGF10 expression. Plays an important role in embryonic lung development. May contribute to embryonic brain development by regulating the proliferation of dopaminergic precursors and neurons. This chain is Protein Wnt-2 (WNT2), found in Callithrix jacchus (White-tufted-ear marmoset).